Consider the following 413-residue polypeptide: Transcription factor bHLH23 (413 aa).

Positions 40–75 (SSQTQTPSCDPPLILRGSGSGDGEGNGPLPQPPPPL) are disordered. T186 carries the phosphothreonine modification. S191 carries the post-translational modification Phosphoserine. 2 disordered regions span residues 232–278 (TEPV…RSRA) and 391–413 (ETEQ…KMFS). Residues 246 to 257 (TDERKRKTREET) are compositionally biased toward basic and acidic residues. Residues 277 to 326 (RAAIMHKLSERRRRQKINEMMKALQELLPRCTKTDRSSMLDDVIEYVKSL) form the bHLH domain.

In terms of assembly, homodimer. Expressed constitutively in leaves, stems, and flowers.

The protein resides in the nucleus. This chain is Transcription factor bHLH23 (BHLH23), found in Arabidopsis thaliana (Mouse-ear cress).